The chain runs to 66 residues: Cold shock-like protein (66 aa).

Residues 3 to 62 (GKVKWFDSKKGYGFITKDEGGDVFVHWSAIEMEGFKTLKEGQVVEFEIQEGKKGPQAAHV) form the CSD domain.

As to quaternary structure, monomer.

It localises to the cytoplasm. The protein is Cold shock-like protein (csp) of Thermotoga maritima (strain ATCC 43589 / DSM 3109 / JCM 10099 / NBRC 100826 / MSB8).